Reading from the N-terminus, the 364-residue chain is Sorbitol dehydrogenase (364 aa).

Residue Cys-54 participates in Zn(2+) binding. Position 60 (Tyr-60) interacts with substrate. Zn(2+) contacts are provided by His-79 and Glu-80. Position 165 (Glu-165) interacts with substrate. NAD(+)-binding positions include Ile-193, Asp-213, Arg-218, 284-286, and 308-310; these read VGM and VFR. Substrate contacts are provided by Arg-310 and Tyr-311.

It belongs to the zinc-containing alcohol dehydrogenase family. In terms of assembly, homotetramer. It depends on Zn(2+) as a cofactor. In terms of tissue distribution, mostly expressed in dry seeds and leaves, and, to a lower extent, in roots, stems, flowers and siliques (at protein level).

It localises to the mitochondrion membrane. It is found in the cell membrane. The protein resides in the cytoplasm. Its subcellular location is the cytosol. The enzyme catalyses keto-D-fructose + NADH + H(+) = D-sorbitol + NAD(+). It carries out the reaction ribitol + NAD(+) = D-ribulose + NADH + H(+). The catalysed reaction is xylitol + NAD(+) = D-xylulose + NADH + H(+). Polyol dehydrogenase that catalyzes the NAD(+)-dependent oxidation of various sugar alcohols. Is mostly active with D-sorbitol (D-glucitol), ribitol and xylitol as substrates, leading to the C2-oxidized products D-fructose, D-ribulose and D-xylulose, respectively. To a lesser extent, can also oxidize arabitol, mannitol, lactitol and maltitol in vitro. Is required for sorbitol metabolism. Cannot use NADP(+) as the electron acceptor. The polypeptide is Sorbitol dehydrogenase (SDH) (Arabidopsis thaliana (Mouse-ear cress)).